The following is a 47-amino-acid chain: PhoP/PhoQ regulator MgrB (47 aa).

Residues 6-26 (WVILIIVLIACVILWTQTINV) traverse the membrane as a helical segment.

The protein belongs to the MgrB family. May form homooligomers. Probably interacts with the periplasmic domain of PhoQ.

Its subcellular location is the cell inner membrane. In terms of biological role, phoP-regulated transcription is redox-sensitive, being activated when the periplasm becomes more reducing. MgrB acts between DsbA/DsbB and PhoP/PhoQ in this pathway. Represses PhoP/PhoQ signaling, possibly by binding to the periplasmic domain of PhoQ, altering its activity and that of downstream effector PhoP. In Enterobacter sp. (strain 638), this protein is PhoP/PhoQ regulator MgrB.